A 115-amino-acid polypeptide reads, in one-letter code: Prefoldin subunit beta (115 aa).

Belongs to the prefoldin subunit beta family. Heterohexamer of two alpha and four beta subunits.

The protein localises to the cytoplasm. In terms of biological role, molecular chaperone capable of stabilizing a range of proteins. Seems to fulfill an ATP-independent, HSP70-like function in archaeal de novo protein folding. The polypeptide is Prefoldin subunit beta (Methanococcus aeolicus (strain ATCC BAA-1280 / DSM 17508 / OCM 812 / Nankai-3)).